We begin with the raw amino-acid sequence, 756 residues long: 5-methyltetrahydropteroyltriglutamate--homocysteine methyltransferase (756 aa).

5-methyltetrahydropteroyltri-L-glutamate is bound by residues R16–K19 and K116. L-homocysteine-binding positions include I433 to S435 and E486. L-methionine contacts are provided by residues I433 to S435 and E486. Residues R517–C518 and W563 each bind 5-methyltetrahydropteroyltri-L-glutamate. Residue D601 coordinates L-homocysteine. Residue D601 coordinates L-methionine. E607 lines the 5-methyltetrahydropteroyltri-L-glutamate pocket. 3 residues coordinate Zn(2+): H643, C645, and E667. The active-site Proton donor is H696. Zn(2+) is bound at residue C728.

It belongs to the vitamin-B12 independent methionine synthase family. It depends on Zn(2+) as a cofactor.

It catalyses the reaction 5-methyltetrahydropteroyltri-L-glutamate + L-homocysteine = tetrahydropteroyltri-L-glutamate + L-methionine. The protein operates within amino-acid biosynthesis; L-methionine biosynthesis via de novo pathway; L-methionine from L-homocysteine (MetE route): step 1/1. Catalyzes the transfer of a methyl group from 5-methyltetrahydrofolate to homocysteine resulting in methionine formation. The sequence is that of 5-methyltetrahydropteroyltriglutamate--homocysteine methyltransferase from Buchnera aphidicola subsp. Baizongia pistaciae (strain Bp).